A 580-amino-acid polypeptide reads, in one-letter code: MFS-type transporter thnB (580 aa).

A disordered region spans residues 1 to 33 (MSGDYSATRKSENVDTSTTASQEDSSLAPEQPE). Polar residues predominate over residues 14-25 (VDTSTTASQEDS). The next 7 helical transmembrane spans lie at 60–80 (LITL…DQTI), 92–112 (FHGL…LGGF), 125–145 (LKIS…ICGV), 157–177 (AIAG…LAFS), 188–208 (STMG…GGAF), 216–236 (WCFY…FLFF), and 259–279 (VGTV…QYAG). An N-linked (GlcNAc...) asparagine glycan is attached at Asn285. 7 helical membrane-spanning segments follow: residues 286–306 (SSVV…LAAW), 331–351 (IFQF…PIYF), 364–384 (VDNL…GAAV), 389–409 (MATP…GLLY), 421–441 (IGYQ…ALNI), 457–477 (SLYF…QAAF), and 529–549 (FAVS…MVMI).

It belongs to the major facilitator superfamily.

Its subcellular location is the membrane. Functionally, MFS-type transporter; part of the gene cluster that produces the tetronate natural products trihazones. This chain is MFS-type transporter thnB, found in Trichoderma harzianum (Hypocrea lixii).